Here is an 880-residue protein sequence, read N- to C-terminus: Alanine--tRNA ligase (880 aa).

Zn(2+)-binding residues include His-567, His-571, Cys-669, and His-673.

This sequence belongs to the class-II aminoacyl-tRNA synthetase family. It depends on Zn(2+) as a cofactor.

It localises to the cytoplasm. The catalysed reaction is tRNA(Ala) + L-alanine + ATP = L-alanyl-tRNA(Ala) + AMP + diphosphate. In terms of biological role, catalyzes the attachment of alanine to tRNA(Ala) in a two-step reaction: alanine is first activated by ATP to form Ala-AMP and then transferred to the acceptor end of tRNA(Ala). Also edits incorrectly charged Ser-tRNA(Ala) and Gly-tRNA(Ala) via its editing domain. In Bacillus thuringiensis (strain Al Hakam), this protein is Alanine--tRNA ligase.